Consider the following 286-residue polypeptide: UDP-3-O-acyl-N-acetylglucosamine deacetylase (286 aa).

His79, His237, and Asp241 together coordinate Zn(2+). The active-site Proton donor is the His264.

It belongs to the LpxC family. Zn(2+) serves as cofactor.

It catalyses the reaction a UDP-3-O-[(3R)-3-hydroxyacyl]-N-acetyl-alpha-D-glucosamine + H2O = a UDP-3-O-[(3R)-3-hydroxyacyl]-alpha-D-glucosamine + acetate. It functions in the pathway glycolipid biosynthesis; lipid IV(A) biosynthesis; lipid IV(A) from (3R)-3-hydroxytetradecanoyl-[acyl-carrier-protein] and UDP-N-acetyl-alpha-D-glucosamine: step 2/6. Its function is as follows. Catalyzes the hydrolysis of UDP-3-O-myristoyl-N-acetylglucosamine to form UDP-3-O-myristoylglucosamine and acetate, the committed step in lipid A biosynthesis. This Chlamydia trachomatis serovar L2 (strain ATCC VR-902B / DSM 19102 / 434/Bu) protein is UDP-3-O-acyl-N-acetylglucosamine deacetylase.